Reading from the N-terminus, the 706-residue chain is G2/M phase-specific E3 ubiquitin-protein ligase (706 aa).

The C2HC pre-PHD-type zinc finger occupies 11-51 (NLACVFCRKNDDCPNKYGEKKTKEKWNLTVHYYCLLMSSGI). Residues 79-128 (LKCCVCKKNGASIGCVAPRCKRSYHFPCGLQRECIFQFTGNFASFCWNHR) form a PHD-type 1 zinc finger. The PHD-type 2; degenerate zinc-finger motif lies at 143–193 (PCTICLEFIEPIPSYNILRSPCCKNAWFHRDCLQVQAINAGVFFFRCTICS). The PHD-type 3 zinc-finger motif lies at 237-286 (RCRCKEGRDYNAPDSKWEIKRCQCCGSSGTHLACSSLRSWEQNWECLECR). Positions 371-698 (IWTSALDAFR…IRNTLKLEKE (328 aa)) constitute an HECT domain.

The protein resides in the nucleus. The protein localises to the nucleolus. It is found in the cytoplasm. It catalyses the reaction S-ubiquitinyl-[E2 ubiquitin-conjugating enzyme]-L-cysteine + [acceptor protein]-L-lysine = [E2 ubiquitin-conjugating enzyme]-L-cysteine + N(6)-ubiquitinyl-[acceptor protein]-L-lysine.. The protein operates within protein modification; protein ubiquitination. In terms of biological role, E3 ubiquitin-protein ligase which accepts ubiquitin from an E2 ubiquitin-conjugating enzyme in the form of a thioester and then directly transfers the ubiquitin to targeted substrates. Essential in early embryonic development to prevent apoptotic death. This chain is G2/M phase-specific E3 ubiquitin-protein ligase (G2E3), found in Macaca fascicularis (Crab-eating macaque).